A 193-amino-acid polypeptide reads, in one-letter code: Imidazoleglycerol-phosphate dehydratase (193 aa).

This sequence belongs to the imidazoleglycerol-phosphate dehydratase family.

The protein localises to the cytoplasm. It carries out the reaction D-erythro-1-(imidazol-4-yl)glycerol 3-phosphate = 3-(imidazol-4-yl)-2-oxopropyl phosphate + H2O. It participates in amino-acid biosynthesis; L-histidine biosynthesis; L-histidine from 5-phospho-alpha-D-ribose 1-diphosphate: step 6/9. The protein is Imidazoleglycerol-phosphate dehydratase of Saccharolobus islandicus (strain M.16.27) (Sulfolobus islandicus).